The primary structure comprises 461 residues: Bifunctional protein GlmU (461 aa).

Residues 1 to 232 (MNLQIIILAA…SFEVQGINNR (232 aa)) form a pyrophosphorylase region. UDP-N-acetyl-alpha-D-glucosamine is bound by residues 8 to 11 (LAAG), lysine 22, glutamine 73, and 78 to 79 (GT). Aspartate 102 contributes to the Mg(2+) binding site. Positions 142, 157, and 230 each coordinate UDP-N-acetyl-alpha-D-glucosamine. Asparagine 230 is a Mg(2+) binding site. A linker region spans residues 233–253 (QQLQQLERIWQQRAANQLMEK). An N-acetyltransferase region spans residues 254-461 (GATLADANRF…WKRPVKRERD (208 aa)). The UDP-N-acetyl-alpha-D-glucosamine site is built by arginine 336 and lysine 354. Histidine 366 functions as the Proton acceptor in the catalytic mechanism. UDP-N-acetyl-alpha-D-glucosamine contacts are provided by tyrosine 369 and asparagine 380. Acetyl-CoA contacts are provided by residues alanine 383, 389 to 390 (NY), serine 408, and alanine 426.

It in the N-terminal section; belongs to the N-acetylglucosamine-1-phosphate uridyltransferase family. In the C-terminal section; belongs to the transferase hexapeptide repeat family. In terms of assembly, homotrimer. Requires Mg(2+) as cofactor.

The protein resides in the cytoplasm. The catalysed reaction is alpha-D-glucosamine 1-phosphate + acetyl-CoA = N-acetyl-alpha-D-glucosamine 1-phosphate + CoA + H(+). It carries out the reaction N-acetyl-alpha-D-glucosamine 1-phosphate + UTP + H(+) = UDP-N-acetyl-alpha-D-glucosamine + diphosphate. Its pathway is nucleotide-sugar biosynthesis; UDP-N-acetyl-alpha-D-glucosamine biosynthesis; N-acetyl-alpha-D-glucosamine 1-phosphate from alpha-D-glucosamine 6-phosphate (route II): step 2/2. It participates in nucleotide-sugar biosynthesis; UDP-N-acetyl-alpha-D-glucosamine biosynthesis; UDP-N-acetyl-alpha-D-glucosamine from N-acetyl-alpha-D-glucosamine 1-phosphate: step 1/1. The protein operates within bacterial outer membrane biogenesis; LPS lipid A biosynthesis. In terms of biological role, catalyzes the last two sequential reactions in the de novo biosynthetic pathway for UDP-N-acetylglucosamine (UDP-GlcNAc). The C-terminal domain catalyzes the transfer of acetyl group from acetyl coenzyme A to glucosamine-1-phosphate (GlcN-1-P) to produce N-acetylglucosamine-1-phosphate (GlcNAc-1-P), which is converted into UDP-GlcNAc by the transfer of uridine 5-monophosphate (from uridine 5-triphosphate), a reaction catalyzed by the N-terminal domain. This chain is Bifunctional protein GlmU, found in Legionella pneumophila (strain Corby).